Reading from the N-terminus, the 391-residue chain is Elongation factor Tu (391 aa).

A tr-type G domain is found at 10–201 (KPHVNIGTIG…AVDEYIPTPA (192 aa)). Positions 19 to 26 (GHVDHGKT) are G1. 19-26 (GHVDHGKT) provides a ligand contact to GTP. Residue T26 coordinates Mg(2+). The G2 stretch occupies residues 55 to 59 (GITIS). Positions 76–79 (DCPG) are G3. Residues 76 to 80 (DCPGH) and 131 to 134 (NKVD) each bind GTP. A G4 region spans residues 131–134 (NKVD). The interval 169 to 171 (SAL) is G5.

Belongs to the TRAFAC class translation factor GTPase superfamily. Classic translation factor GTPase family. EF-Tu/EF-1A subfamily. Monomer.

It localises to the cytoplasm. It carries out the reaction GTP + H2O = GDP + phosphate + H(+). Its function is as follows. GTP hydrolase that promotes the GTP-dependent binding of aminoacyl-tRNA to the A-site of ribosomes during protein biosynthesis. The polypeptide is Elongation factor Tu (Cereibacter sphaeroides (strain ATCC 17025 / ATH 2.4.3) (Rhodobacter sphaeroides)).